Reading from the N-terminus, the 234-residue chain is Urease accessory protein UreG 1 (234 aa).

A disordered region spans residues 1–29 (MTRTPTGVPMHLGHTHDAPAAVSADATRP). Residue 42–49 (GPVGSGKT) coordinates GTP.

Belongs to the SIMIBI class G3E GTPase family. UreG subfamily. Homodimer. UreD, UreF and UreG form a complex that acts as a GTP-hydrolysis-dependent molecular chaperone, activating the urease apoprotein by helping to assemble the nickel containing metallocenter of UreC. The UreE protein probably delivers the nickel.

It localises to the cytoplasm. In terms of biological role, facilitates the functional incorporation of the urease nickel metallocenter. This process requires GTP hydrolysis, probably effectuated by UreG. The sequence is that of Urease accessory protein UreG 1 from Streptomyces griseus subsp. griseus (strain JCM 4626 / CBS 651.72 / NBRC 13350 / KCC S-0626 / ISP 5235).